We begin with the raw amino-acid sequence, 384 residues long: Neuropeptide Y receptor type 2 (384 aa).

The Extracellular portion of the chain corresponds to 1–54; it reads MKMGPLGAEADENQTVEEMKVDQFGPGHTTLPGELAPDSEPELIDSTKLIEVQV. N-linked (GlcNAc...) asparagine glycosylation occurs at Asn13. Residues 55 to 75 form a helical membrane-spanning segment; the sequence is VLILAYCSIILLGVIGNSLVI. The Cytoplasmic segment spans residues 76 to 89; the sequence is HVVIKFKSMRTVTN. The helical transmembrane segment at 90-110 threads the bilayer; the sequence is FFIANLAVADLLVNTLCLPFT. The Extracellular segment spans residues 111–127; it reads LTYTLMGEWKMGPVLCH. Cys126 and Cys206 are oxidised to a cystine. Residues 128–148 form a helical membrane-spanning segment; the sequence is LVPYAQGLAVQVSTITLTVIA. Topologically, residues 149–168 are cytoplasmic; the sequence is LDRHRCIVYHLESKISKQIS. Residues 169–189 form a helical membrane-spanning segment; the sequence is FLIIGLAWGVSALLASPLAIF. Residues 190 to 219 are Extracellular-facing; it reads REYSLIEIIPDFEIVACTEKWPGEEKGIYG. The chain crosses the membrane as a helical span at residues 220 to 240; that stretch reads TIYSLSSLLILYVLPLGIISF. Topologically, residues 241–271 are cytoplasmic; sequence SYTRIWSKLKNHVSPGAAHDHYHQRRQKTTK. Residues 272–292 traverse the membrane as a helical segment; the sequence is MLVCVVVVFAVSWLPLHAFQL. Over 293–307 the chain is Extracellular; it reads AVDIDSHVLDLKEYK. The chain crosses the membrane as a helical span at residues 308–328; sequence LIFTVFHIIAMCSTFANPLLY. Residues 329–384 are Cytoplasmic-facing; the sequence is GWMNSNYRKAFLSAFRCEQRLDAIHSEVSVTFKAKKHLQVTKNNGPNDSFTETTNV. The S-palmitoyl cysteine moiety is linked to residue Cys345.

Belongs to the G-protein coupled receptor 1 family.

The protein resides in the cell membrane. Its function is as follows. Receptor for neuropeptide Y and peptide YY. The polypeptide is Neuropeptide Y receptor type 2 (NPY2R) (Bos taurus (Bovine)).